The sequence spans 218 residues: 7-cyano-7-deazaguanine synthase (218 aa).

Residue 10 to 20 (FSGGQDSTTCL) participates in ATP binding. Positions 186, 195, 198, and 201 each coordinate Zn(2+).

It belongs to the QueC family. Homodimer. It depends on Zn(2+) as a cofactor.

It carries out the reaction 7-carboxy-7-deazaguanine + NH4(+) + ATP = 7-cyano-7-deazaguanine + ADP + phosphate + H2O + H(+). Its pathway is purine metabolism; 7-cyano-7-deazaguanine biosynthesis. In terms of biological role, catalyzes the ATP-dependent conversion of 7-carboxy-7-deazaguanine (CDG) to 7-cyano-7-deazaguanine (preQ(0)). This chain is 7-cyano-7-deazaguanine synthase, found in Exiguobacterium sibiricum (strain DSM 17290 / CCUG 55495 / CIP 109462 / JCM 13490 / 255-15).